Consider the following 161-residue polypeptide: Cyclic pyranopterin monophosphate synthase (161 aa).

Substrate-binding positions include 75 to 77 (LCH) and 113 to 114 (ME). Residue Asp-128 is part of the active site.

This sequence belongs to the MoaC family. As to quaternary structure, homohexamer; trimer of dimers.

The enzyme catalyses (8S)-3',8-cyclo-7,8-dihydroguanosine 5'-triphosphate = cyclic pyranopterin phosphate + diphosphate. The protein operates within cofactor biosynthesis; molybdopterin biosynthesis. Catalyzes the conversion of (8S)-3',8-cyclo-7,8-dihydroguanosine 5'-triphosphate to cyclic pyranopterin monophosphate (cPMP). The polypeptide is Cyclic pyranopterin monophosphate synthase (Escherichia coli O9:H4 (strain HS)).